The primary structure comprises 181 residues: Adenine phosphoribosyltransferase (181 aa).

Belongs to the purine/pyrimidine phosphoribosyltransferase family. In terms of assembly, homodimer.

It localises to the cytoplasm. It carries out the reaction AMP + diphosphate = 5-phospho-alpha-D-ribose 1-diphosphate + adenine. It participates in purine metabolism; AMP biosynthesis via salvage pathway; AMP from adenine: step 1/1. Catalyzes a salvage reaction resulting in the formation of AMP, that is energically less costly than de novo synthesis. This is Adenine phosphoribosyltransferase from Rhodopseudomonas palustris (strain HaA2).